The primary structure comprises 343 residues: Phosphatidylglycerol--prolipoprotein diacylglyceryl transferase 1 (343 aa).

4 helical membrane-spanning segments follow: residues 19–39 (VPLR…VWLG), 54–74 (ADIA…YHVI), 93–113 (IWEG…GAWI), and 119–139 (GVPM…AQAI). Arg141 lines the a 1,2-diacyl-sn-glycero-3-phospho-(1'-sn-glycerol) pocket. Transmembrane regions (helical) follow at residues 176-196 (HPTF…VIWA), 202-224 (LGHG…WIEY), and 238-258 (LNNW…VLSA). The tract at residues 269-343 (EPGAETAAGD…TNGADSAKKG (75 aa)) is disordered. The span at 283–293 (ADKDVKGTKDA) shows a compositional bias: basic and acidic residues. Positions 314–324 (APEDTSGADEA) are enriched in acidic residues.

The protein belongs to the Lgt family.

The protein localises to the cell membrane. The catalysed reaction is L-cysteinyl-[prolipoprotein] + a 1,2-diacyl-sn-glycero-3-phospho-(1'-sn-glycerol) = an S-1,2-diacyl-sn-glyceryl-L-cysteinyl-[prolipoprotein] + sn-glycerol 1-phosphate + H(+). It participates in protein modification; lipoprotein biosynthesis (diacylglyceryl transfer). In terms of biological role, catalyzes the transfer of the diacylglyceryl group from phosphatidylglycerol to the sulfhydryl group of the N-terminal cysteine of a prolipoprotein, the first step in the formation of mature lipoproteins. The sequence is that of Phosphatidylglycerol--prolipoprotein diacylglyceryl transferase 1 from Streptomyces coelicolor (strain ATCC BAA-471 / A3(2) / M145).